A 94-amino-acid chain; its full sequence is Pyrimidine/purine nucleoside phosphorylase (94 aa).

The protein belongs to the nucleoside phosphorylase PpnP family.

The catalysed reaction is a purine D-ribonucleoside + phosphate = a purine nucleobase + alpha-D-ribose 1-phosphate. The enzyme catalyses adenosine + phosphate = alpha-D-ribose 1-phosphate + adenine. It carries out the reaction cytidine + phosphate = cytosine + alpha-D-ribose 1-phosphate. It catalyses the reaction guanosine + phosphate = alpha-D-ribose 1-phosphate + guanine. The catalysed reaction is inosine + phosphate = alpha-D-ribose 1-phosphate + hypoxanthine. The enzyme catalyses thymidine + phosphate = 2-deoxy-alpha-D-ribose 1-phosphate + thymine. It carries out the reaction uridine + phosphate = alpha-D-ribose 1-phosphate + uracil. It catalyses the reaction xanthosine + phosphate = alpha-D-ribose 1-phosphate + xanthine. Functionally, catalyzes the phosphorolysis of diverse nucleosides, yielding D-ribose 1-phosphate and the respective free bases. Can use uridine, adenosine, guanosine, cytidine, thymidine, inosine and xanthosine as substrates. Also catalyzes the reverse reactions. The chain is Pyrimidine/purine nucleoside phosphorylase from Klebsiella pneumoniae (strain 342).